A 301-amino-acid polypeptide reads, in one-letter code: Porphobilinogen deaminase (301 aa).

Cysteine 240 is modified (S-(dipyrrolylmethanemethyl)cysteine).

The protein belongs to the HMBS family. As to quaternary structure, monomer. Dipyrromethane is required as a cofactor.

It catalyses the reaction 4 porphobilinogen + H2O = hydroxymethylbilane + 4 NH4(+). The protein operates within porphyrin-containing compound metabolism; protoporphyrin-IX biosynthesis; coproporphyrinogen-III from 5-aminolevulinate: step 2/4. In terms of biological role, tetrapolymerization of the monopyrrole PBG into the hydroxymethylbilane pre-uroporphyrinogen in several discrete steps. This is Porphobilinogen deaminase from Clostridioides difficile (strain 630) (Peptoclostridium difficile).